We begin with the raw amino-acid sequence, 330 residues long: PDZ and LIM domain protein 4 (330 aa).

The region spanning 1-84 (MTHAVTLRGP…HLTLSVSRPE (84 aa)) is the PDZ domain. 2 disordered regions span residues 104-154 (DPEA…NEVT) and 219-239 (EAGE…KPAA). Serine 111, serine 115, serine 118, serine 119, serine 124, and serine 134 each carry phosphoserine. Residues 111-122 (SPATSRRSSISG) show a composition bias toward polar residues. Residues 255 to 305 (CTRCGHGIVGTIVKARDKLYHPECFMCSDCGLNLKQRGYFFLDERLYCENH) enclose the LIM zinc-binding domain.

As to quaternary structure, homodimer. Interacts (via C-terminus only or via combined C-terminus and LIM domain, but not LIM domain only) with PTPN13 (via the second or fourth PDZ domains). Found in a complex with PTPN13 and TRIP6. Interacts (via PDZ domain) with ACTN1 and ACTN2 (via C-terminal SDL residues). Interacts (via PDZ domain) with TRIP6 (via the second LIM domain or via the third LIM domain plus C-terminus). Interacts (via LIM domain) with GRIA1 (via C-terminus); this interaction as well as the interaction with alpha-actinin is required for their colocalization in early endosomes. Interacts with PDLIM1. Forms (via LIM domain) a heterodimer with PDLIM3. Interacts directly with SRC (via kinase domain and to a lesser extent the SH2 domain). In terms of processing, phosphorylated on tyrosine residue(s). Can be dephosphorylated by PTPN13. In terms of tissue distribution, detected in several tissues, most prominent in brain and heart of adults. Expressed in embryonic fibroblasts.

The protein localises to the cytoplasm. It localises to the cytoskeleton. The protein resides in the cell projection. Its subcellular location is the dendritic spine. It is found in the early endosome membrane. The protein localises to the recycling endosome membrane. It localises to the nucleus. The protein resides in the perinuclear region. Its subcellular location is the lamellipodium. It is found in the synapse. The protein localises to the synaptosome. Suppresses SRC activation by recognizing and binding to active SRC and facilitating PTPN13-mediated dephosphorylation of SRC 'Tyr-419' leading to its inactivation. Inactivated SRC dissociates from this protein allowing the initiation of a new SRC inactivation cycle. Involved in reorganization of the actin cytoskeleton. In nonmuscle cells, binds to ACTN1 (alpha-actinin-1), increases the affinity of ACTN1 to F-actin (filamentous actin), and promotes formation of actin stress fibers. Involved in regulation of the synaptic AMPA receptor transport in dendritic spines of hippocampal pyramidal neurons directing the receptors toward an insertion at the postsynaptic membrane. Links endosomal surface-internalized GRIA1-containing AMPA receptors to the alpha-actinin/actin cytoskeleton. Increases AMPA receptor-mediated excitatory postsynaptic currents in neurons. The sequence is that of PDZ and LIM domain protein 4 (Pdlim4) from Rattus norvegicus (Rat).